Here is a 123-residue protein sequence, read N- to C-terminus: WAP four-disulfide core domain protein 2 (123 aa).

The first 28 residues, 1–28 (MPASRLVPLGAVLLLGLLLLLELPPVTG), serve as a signal peptide directing secretion. WAP domains are found at residues 30 to 71 (GADK…SAIC) and 74 to 122 (PNEK…VTPN). 8 cysteine pairs are disulfide-bonded: Cys37–Cys63, Cys46–Cys67, Cys50–Cys62, Cys56–Cys71, Cys81–Cys109, Cys92–Cys113, Cys96–Cys108, and Cys102–Cys118. Residue Asn45 is glycosylated (N-linked (GlcNAc...) asparagine).

As to quaternary structure, homotrimer; disulfide-linked. As to expression, epididymis.

It localises to the secreted. Its function is as follows. Broad range protease inhibitor. The chain is WAP four-disulfide core domain protein 2 (WFDC2) from Oryctolagus cuniculus (Rabbit).